The sequence spans 440 residues: Putative F-box/LRR-repeat protein At5g15620 (440 aa).

The F-box domain occupies 1–52 (MDRFSNLPDDVIYHIVSFLSAKEATCLKFVSKNFQNLVTIKRNVVFHHWESF). LRR repeat units lie at residues 4–31 (FSNLPDDVIYHIVSFLSAKEATCLKFVS), 126–153 (LKLGCGFVIDILPKNALLPALKTLILDS), 156–181 (FYASDGCAFTRLLSASPVLEELVIDR), 194–205 (SSPTLKRLTLRR), 210–235 (PEPETWTDFESVSFDTPSLAYLKYKD), 264–289 (YWLNRSADPSNLIRGLKNVEILSIKV), and 318–343 (EADFCWDPLQILLEKSPNLKTLTIEG).

The sequence is that of Putative F-box/LRR-repeat protein At5g15620 from Arabidopsis thaliana (Mouse-ear cress).